We begin with the raw amino-acid sequence, 254 residues long: Phosphonates import ATP-binding protein PhnC (254 aa).

The region spanning 2–246 (IQLKNVSKIY…VFDDIYNGGN (245 aa)) is the ABC transporter domain. Residue 35-42 (GLSGAGKS) participates in ATP binding.

This sequence belongs to the ABC transporter superfamily. Phosphonates importer (TC 3.A.1.9.1) family. As to quaternary structure, the complex is composed of two ATP-binding proteins (PhnC), two transmembrane proteins (PhnE) and a solute-binding protein (PhnD).

It is found in the cell membrane. It catalyses the reaction phosphonate(out) + ATP + H2O = phosphonate(in) + ADP + phosphate + H(+). Part of the ABC transporter complex PhnCDE involved in phosphonates import. Responsible for energy coupling to the transport system. The polypeptide is Phosphonates import ATP-binding protein PhnC (Lactobacillus johnsonii (strain CNCM I-12250 / La1 / NCC 533)).